The sequence spans 308 residues: Palmitoyltransferase ZDHHC7 (308 aa).

Residues 1-50 (MQPSGHRLRDIEHHPLLTDNDNYDSASSSSSEADMADRVWFIRDGCGMVC) lie on the Cytoplasmic side of the membrane. The helical transmembrane segment at 51-71 (AVMTWLLVVYADFVVTFVMLL) threads the bilayer. The Lumenal segment spans residues 72–75 (PSKD). A helical membrane pass occupies residues 76-96 (FWYSVVNGVLFNCLAVLALSS). The Cytoplasmic segment spans residues 97-173 (HLRTMLTDPG…NNCVGEKNQR (77 aa)). The 51-residue stretch at 130-180 (YKCPKCCCIKPERAHHCSICKRCIRKMDHHCPWVNNCVGEKNQRFFVLFTM) folds into the DHHC domain. The active-site S-palmitoyl cysteine intermediate is the C160. The chain crosses the membrane as a helical span at residues 174 to 194 (FFVLFTMYIALSSIHALILCG). Residues 195 to 217 (LQFISCVRGQWTECSDFSPPITV) are Lumenal-facing. A helical transmembrane segment spans residues 218–238 (ILLVFLCLEGLLFFTFTAVMF). Residues 239–308 (GTQIHSICND…TRKGGPEFSV (70 aa)) lie on the Cytoplasmic side of the membrane.

Belongs to the DHHC palmitoyltransferase family. As to quaternary structure, homooligomers. Heterooligomers with ZDHHC3. In terms of processing, autopalmitoylated. In terms of tissue distribution, widely expressed. Present in Sertoli cells (at protein level).

Its subcellular location is the golgi apparatus membrane. It carries out the reaction L-cysteinyl-[protein] + hexadecanoyl-CoA = S-hexadecanoyl-L-cysteinyl-[protein] + CoA. It catalyses the reaction L-cysteinyl-[protein] + tetradecanoyl-CoA = S-tetradecanoyl-L-cysteinyl-[protein] + CoA. The catalysed reaction is L-cysteinyl-[protein] + octadecanoyl-CoA = S-octadecanoyl-L-cysteinyl-[protein] + CoA. Its function is as follows. Golgi-localized palmitoyltransferase that catalyzes the addition of palmitate onto various protein substrates and therefore functions in several unrelated biological processes. Has no stringent fatty acid selectivity and in addition to palmitate can also transfer onto target proteins myristate from tetradecanoyl-CoA and stearate from octadecanoyl-CoA. Palmitoylates sex steroid hormone receptors, including ESR1, PGR and AR, thereby regulating their targeting to the plasma membrane and their function in rapid intracellular signaling upon binding of sex hormones. Palmitoylates GNAQ, a heterotrimeric G protein, regulating its dynamic localization at the plasma membrane and is thereby involved in GNAQ-dependent G protein-coupled receptor signaling pathways. Also functions in ligand-induced cell death by regulating the FAS signaling pathway through the palmitoylation and stabilization of the receptor at the plasma membrane. In epithelial cells, palmitoylates SCRIB and regulates its localization to the plasma membrane, regulating indirectly cell polarity and differentiation. Also palmitoylates JAM3 and promotes its expression at tight junctions and regulates its function in cell migration. Palmitoylates the glucose transporter GLUT4/SLC2A4 and controls the insulin-dependent translocation of GLUT4 to the plasma membrane. In brain, could also palmitoylate SNAP25 and DLG4/PSD95. Could also palmitoylate DNAJC5 and regulate its localization to the Golgi membrane. Could also palmitoylate NCDN. May play a role in follicle stimulation hormone (FSH) activation of testicular Sertoli cells. Activates pyroptosis by catalyzing palmitoylation of gasdermin-D (GSDMD). In Rattus norvegicus (Rat), this protein is Palmitoyltransferase ZDHHC7.